Reading from the N-terminus, the 189-residue chain is Ribulose bisphosphate carboxylase small subunit, chloroplastic (189 aa).

A chloroplast-targeting transit peptide spans 1–66; sequence MASSIMALSS…KTTSNGSRVR (66 aa).

The protein belongs to the RuBisCO small chain family. Heterohexadecamer of 8 large and 8 small subunits.

The protein localises to the plastid. It is found in the chloroplast. RuBisCO catalyzes two reactions: the carboxylation of D-ribulose 1,5-bisphosphate, the primary event in carbon dioxide fixation, as well as the oxidative fragmentation of the pentose substrate. Both reactions occur simultaneously and in competition at the same active site. Although the small subunit is not catalytic it is essential for maximal activity. This is Ribulose bisphosphate carboxylase small subunit, chloroplastic from Larix laricina (Tamarack).